A 1373-amino-acid polypeptide reads, in one-letter code: DNA-directed RNA polymerase subunit beta (1373 aa).

Belongs to the RNA polymerase beta chain family. As to quaternary structure, the RNAP catalytic core consists of 2 alpha, 1 beta, 1 beta' and 1 omega subunit. When a sigma factor is associated with the core the holoenzyme is formed, which can initiate transcription.

It catalyses the reaction RNA(n) + a ribonucleoside 5'-triphosphate = RNA(n+1) + diphosphate. Its function is as follows. DNA-dependent RNA polymerase catalyzes the transcription of DNA into RNA using the four ribonucleoside triphosphates as substrates. The chain is DNA-directed RNA polymerase subunit beta from Rhodopseudomonas palustris (strain BisB18).